The sequence spans 154 residues: MTPDIDRQVALETATELLPTQADLEAWVGAVLARHPDTDRHELSVRFVTADESQALNRDYRGKDKPTNVLSFPFEAPPGLPLALLGDLAICHAVVVDEAAEQGKPLAHHYAHMVIHGTLHLLGYDHIDDREAEEMEALERELLAHFAIGDPYAE.

Positions 116, 120, and 126 each coordinate Zn(2+).

The protein belongs to the endoribonuclease YbeY family. Zn(2+) serves as cofactor.

It localises to the cytoplasm. In terms of biological role, single strand-specific metallo-endoribonuclease involved in late-stage 70S ribosome quality control and in maturation of the 3' terminus of the 16S rRNA. This chain is Endoribonuclease YbeY, found in Chromohalobacter salexigens (strain ATCC BAA-138 / DSM 3043 / CIP 106854 / NCIMB 13768 / 1H11).